Reading from the N-terminus, the 135-residue chain is Photosystem II extrinsic protein U (135 aa).

The signal sequence occupies residues 1–29; the sequence is MKRLLSWLTGALVMASLMAGLVMPSSVYA.

This sequence belongs to the PsbU family. In terms of assembly, PSII is composed of 1 copy each of membrane proteins PsbA, PsbB, PsbC, PsbD, PsbE, PsbF, PsbH, PsbI, PsbJ, PsbK, PsbL, PsbM, PsbT, PsbX, PsbY, PsbZ, Psb30/Ycf12, peripheral proteins PsbO, CyanoQ (PsbQ), PsbU, PsbV and a large number of cofactors. It forms dimeric complexes.

It is found in the cellular thylakoid membrane. Its function is as follows. One of the extrinsic, lumenal subunits of photosystem II (PSII). PSII is a light-driven water plastoquinone oxidoreductase, using light energy to abstract electrons from H(2)O, generating a proton gradient subsequently used for ATP formation. The extrinsic proteins stabilize the structure of photosystem II oxygen-evolving complex (OEC), the ion environment of oxygen evolution and protect the OEC against heat-induced inactivation. This chain is Photosystem II extrinsic protein U, found in Synechococcus sp. (strain CC9605).